A 287-amino-acid polypeptide reads, in one-letter code: Lipoyl synthase (287 aa).

Residues cysteine 34, cysteine 39, cysteine 45, cysteine 60, cysteine 64, cysteine 67, and serine 273 each coordinate [4Fe-4S] cluster. The Radical SAM core domain occupies 46–262 (WNKRHATVMI…KYIAYSKGFL (217 aa)).

Belongs to the radical SAM superfamily. Lipoyl synthase family. [4Fe-4S] cluster serves as cofactor.

The protein localises to the cytoplasm. It catalyses the reaction [[Fe-S] cluster scaffold protein carrying a second [4Fe-4S](2+) cluster] + N(6)-octanoyl-L-lysyl-[protein] + 2 oxidized [2Fe-2S]-[ferredoxin] + 2 S-adenosyl-L-methionine + 4 H(+) = [[Fe-S] cluster scaffold protein] + N(6)-[(R)-dihydrolipoyl]-L-lysyl-[protein] + 4 Fe(3+) + 2 hydrogen sulfide + 2 5'-deoxyadenosine + 2 L-methionine + 2 reduced [2Fe-2S]-[ferredoxin]. It participates in protein modification; protein lipoylation via endogenous pathway; protein N(6)-(lipoyl)lysine from octanoyl-[acyl-carrier-protein]: step 2/2. In terms of biological role, catalyzes the radical-mediated insertion of two sulfur atoms into the C-6 and C-8 positions of the octanoyl moiety bound to the lipoyl domains of lipoate-dependent enzymes, thereby converting the octanoylated domains into lipoylated derivatives. The protein is Lipoyl synthase of Wolbachia pipientis wMel.